Consider the following 259-residue polypeptide: Ribosomal RNA small subunit methyltransferase A (259 aa).

S-adenosyl-L-methionine contacts are provided by asparagine 13, leucine 15, glycine 40, glutamate 61, aspartate 85, and asparagine 103.

Belongs to the class I-like SAM-binding methyltransferase superfamily. rRNA adenine N(6)-methyltransferase family. RsmA subfamily.

It is found in the cytoplasm. It carries out the reaction adenosine(1518)/adenosine(1519) in 16S rRNA + 4 S-adenosyl-L-methionine = N(6)-dimethyladenosine(1518)/N(6)-dimethyladenosine(1519) in 16S rRNA + 4 S-adenosyl-L-homocysteine + 4 H(+). In terms of biological role, specifically dimethylates two adjacent adenosines (A1518 and A1519) in the loop of a conserved hairpin near the 3'-end of 16S rRNA in the 30S particle. May play a critical role in biogenesis of 30S subunits. This is Ribosomal RNA small subunit methyltransferase A from Neisseria meningitidis serogroup B (strain ATCC BAA-335 / MC58).